Consider the following 383-residue polypeptide: Chitinase-3-like protein 1 (383 aa).

Residues 1 to 21 (MGLRAAHTGFVVLVLLQSCAA) form the signal peptide. The GH18 domain occupies 22-383 (YKLICYYTSW…SAIKDVLARV (362 aa)). A disulfide bridge links Cys26 with Cys51. A glycan (N-linked (GlcNAc...) asparagine) is linked at Asn60. Residues 70-71 (EW), 97-100 (GGWN), Tyr141, 204-207 (LTYD), and Arg263 contribute to the chitin site. Cys300 and Cys364 form a disulfide bridge. The important for AKT1 activation and IL8 production stretch occupies residues 324 to 338 (QWVAYDDQESVKNKA). Residue Trp352 coordinates chitin. Asn367 carries N-linked (GlcNAc...) asparagine glycosylation.

It belongs to the glycosyl hydrolase 18 family. Monomer. In terms of processing, glycosylated. In terms of tissue distribution, mammary secretions collected during the non-lactating period.

The protein resides in the secreted. It is found in the extracellular space. It localises to the cytoplasm. The protein localises to the perinuclear region. Its subcellular location is the endoplasmic reticulum. Functionally, carbohydrate-binding lectin with a preference for chitin. Has no chitinase activity. May play a role in tissue remodeling and in the capacity of cells to respond to and cope with changes in their environment. Plays a role in T-helper cell type 2 (Th2) inflammatory response and IL-13-induced inflammation, regulating allergen sensitization, inflammatory cell apoptosis, dendritic cell accumulation and M2 macrophage differentiation. Facilitates invasion of pathogenic enteric bacteria into colonic mucosa and lymphoid organs. Mediates activation of AKT1 signaling pathway and subsequent IL8 production in colonic epithelial cells. Regulates antibacterial responses in lung by contributing to macrophage bacterial killing, controlling bacterial dissemination and augmenting host tolerance. Also regulates hyperoxia-induced injury, inflammation and epithelial apoptosis in lung. In Bos taurus (Bovine), this protein is Chitinase-3-like protein 1 (CHI3L1).